A 229-amino-acid chain; its full sequence is MVHPYLFLNFFRELLHPLGFSEAGADAVVYTWLIMIGLVVLSIAATKRLQAVPSGLQNFMEVIVGGIENMLVETMGEHGKPFFPLVATLALFILVSNLIGLVPGFFPPTANINTTAACAVVVFVTTHIVGVKHHGAGYIKHFLGPIAWLAPMMFFIEVIGHLSRVISLTLRLFGNMNGHELVLIIFFGLAPFIVPLPMMLMGVLVSFIQAFVFMLLAMIYIQGSLEHAH.

6 helical membrane passes run 25 to 45 (ADAVVYTWLIMIGLVVLSIAA), 82 to 102 (FFPLVATLALFILVSNLIGLV), 104 to 124 (GFFPPTANINTTAACAVVVFV), 142 to 162 (FLGPIAWLAPMMFFIEVIGHL), 181 to 201 (LVLIIFFGLAPFIVPLPMMLM), and 202 to 222 (GVLVSFIQAFVFMLLAMIYIQ).

Belongs to the ATPase A chain family. F-type ATPases have 2 components, CF(1) - the catalytic core - and CF(0) - the membrane proton channel. CF(1) has five subunits: alpha(3), beta(3), gamma(1), delta(1), epsilon(1). CF(0) has three main subunits: a(1), b(2) and c(9-12). The alpha and beta chains form an alternating ring which encloses part of the gamma chain. CF(1) is attached to CF(0) by a central stalk formed by the gamma and epsilon chains, while a peripheral stalk is formed by the delta and b chains.

The protein localises to the cell inner membrane. Key component of the proton channel; it plays a direct role in the translocation of protons across the membrane. This is ATP synthase subunit a from Citrifermentans bemidjiense (strain ATCC BAA-1014 / DSM 16622 / JCM 12645 / Bem) (Geobacter bemidjiensis).